A 103-amino-acid polypeptide reads, in one-letter code: N(4)-acetylcytidine amidohydrolase (103 aa).

Residues 6 to 92 (TFFERFEPGI…VIQEIYPGLE (87 aa)) form the ASCH domain. Lys20 functions as the Proton acceptor in the catalytic mechanism. Catalysis depends on Thr23, which acts as the Nucleophile. Catalysis depends on Glu73, which acts as the Proton donor.

It belongs to the N(4)-acetylcytidine amidohydrolase family.

The catalysed reaction is N(4)-acetylcytidine + H2O = cytidine + acetate + H(+). It catalyses the reaction N(4)-acetyl-2'-deoxycytidine + H2O = 2'-deoxycytidine + acetate + H(+). The enzyme catalyses N(4)-acetylcytosine + H2O = cytosine + acetate + H(+). Its function is as follows. Catalyzes the hydrolysis of N(4)-acetylcytidine (ac4C). This is N(4)-acetylcytidine amidohydrolase from Shewanella sp. (strain MR-7).